The following is a 256-amino-acid chain: Protein crossbronx-like (256 aa).

One can recognise a UBC core domain in the interval asparagine 17–glutamine 179.

The protein belongs to the ubiquitin-conjugating enzyme family. FTS subfamily.

This is Protein crossbronx-like from Drosophila virilis (Fruit fly).